Here is a 381-residue protein sequence, read N- to C-terminus: ATP synthase subunit a (381 aa).

Residues 24-73 (PVAAPVEQHGQAPEAAPDAHGSPAGEPGAAVEAHAAAAEHGEAAGHEGGH) form a disordered region. Low complexity predominate over residues 47–59 (AGEPGAAVEAHAA). A compositionally biased stretch (basic and acidic residues) spans 60–73 (AAEHGEAAGHEGGH). 6 helical membrane passes run 128-148 (KHVVMMWLASALLLVVVLGAV), 190-210 (LVTAFFFILFLNLFGLLPFSA), 215-235 (NLSVTVAMALFTFVITQYAAI), 255-275 (LAPLWLIMIPVEFLGLFTKPF), 290-310 (FVILALLGLIFALGTPWVAFG), and 316-336 (LSIFLLELFVAFVQAYIFTML). The span at 351–360 (DHGHAEEHGH) shows a compositional bias: basic and acidic residues. The tract at residues 351–381 (DHGHAEEHGHAGPAAGSEHGSHVAGASPGHG) is disordered.

Belongs to the ATPase A chain family. F-type ATPases have 2 components, CF(1) - the catalytic core - and CF(0) - the membrane proton channel. CF(1) has five subunits: alpha(3), beta(3), gamma(1), delta(1), epsilon(1). CF(0) has three main subunits: a(1), b(2) and c(9-12). The alpha and beta chains form an alternating ring which encloses part of the gamma chain. CF(1) is attached to CF(0) by a central stalk formed by the gamma and epsilon chains, while a peripheral stalk is formed by the delta and b chains.

It localises to the cell inner membrane. In terms of biological role, key component of the proton channel; it plays a direct role in the translocation of protons across the membrane. In Anaeromyxobacter dehalogenans (strain 2CP-C), this protein is ATP synthase subunit a.